We begin with the raw amino-acid sequence, 444 residues long: Type I restriction enzyme EcoDI specificity subunit (444 aa).

It belongs to the type-I restriction system S methylase family. The type I restriction/modification system is composed of three polypeptides R, M and S; the restriction enzyme has stoichiometry R(2)M(2)S(1) while the methyltransferase is M(2)S(1).

In terms of biological role, the specificity (S) subunit of a type I restriction enzyme; this subunit dictates DNA sequence specificity. The M and S subunits together form a methyltransferase (MTase) that methylates two adenine residues of the sequence 5'-TTAN(7)GTCY-3'. In the presence of the R subunit the complex can also act as an endonuclease, binding to the same target sequence but cutting the DNA some distance from this site. Whether the DNA is cut or modified depends on the methylation state of the target sequence. When the target site is unmodified, the DNA is cut. When the target site is hemimethylated, the complex acts as a maintenance MTase modifying the DNA so that both strands become methylated. After locating a non-methylated recognition site, the enzyme complex serves as a molecular motor that translocates DNA in an ATP-dependent manner until a collision occurs that triggers cleavage. The polypeptide is Type I restriction enzyme EcoDI specificity subunit (Escherichia coli).